The following is an 899-amino-acid chain: Proline-rich transmembrane protein 4 (899 aa).

Positions 1 to 23 are cleaved as a signal peptide; the sequence is MARHGCLGLGLFCCVLFAATVGP. 2 disordered regions span residues 110 to 152 and 295 to 340; these read LTEW…RRST and TVPI…PEAP. The next 5 helical transmembrane spans lie at 370–390, 392–412, 430–450, 467–487, and 500–520; these read VGAL…LLPW, CPPG…AGTT, ALAW…GLGL, LAAL…GSAA, and GLHA…SCWG. Ser641 carries the phosphoserine modification. Disordered stretches follow at residues 769 to 797 and 839 to 869; these read TGGR…AWPA and PSGS…ASEL. Positions 840-851 are enriched in low complexity; it reads SGSSPSLPASGS.

It is found in the membrane. The sequence is that of Proline-rich transmembrane protein 4 (PRRT4) from Homo sapiens (Human).